The chain runs to 458 residues: MADSKSISPTDITDCFFHNLRAQVRPGDRLTVALSGGVDSVVLLHLLTTFSESMQLEVSAVHVEHGISTYSGEWSAFCQSLCDSLAIPLSIHRLKIRRRPQESLEAIAREARYQIFKHIQADYVMLAQHQDDQVETLILQLLRGAGVKGLSAMPTVRLLEPGKTIRLFRPLLNIPRSEILNYARLHGLSWVTDESNLDTSYDRNFLRHQILPLLEQRSPAYRKTLFRSTQHLGEAAHLLDELAEIDAENTLVTNRLSLQGLRKLEPARARNLLRYLLAQRLIRLPNSTKLEEILRQLNNIQPDNHFRFIVDTLEIRCHRGLIEFLPADSLPEPIAPVVWQGEQHLVIESLQGVLKFTRQNNMGIDPARLSGQIVTIRSRSGGERFQPDCKRPRRSLKKILQEAALAPWVRNTLPLLFCEDQLVWVAGIGIDCNFQISEGSTGLVVAWHPSQINQVSTH.

35 to 40 (SGGVDS) contacts ATP.

Belongs to the tRNA(Ile)-lysidine synthase family.

It is found in the cytoplasm. It carries out the reaction cytidine(34) in tRNA(Ile2) + L-lysine + ATP = lysidine(34) in tRNA(Ile2) + AMP + diphosphate + H(+). In terms of biological role, ligates lysine onto the cytidine present at position 34 of the AUA codon-specific tRNA(Ile) that contains the anticodon CAU, in an ATP-dependent manner. Cytidine is converted to lysidine, thus changing the amino acid specificity of the tRNA from methionine to isoleucine. This Nitrosomonas europaea (strain ATCC 19718 / CIP 103999 / KCTC 2705 / NBRC 14298) protein is tRNA(Ile)-lysidine synthase.